The chain runs to 365 residues: 3-isopropylmalate dehydrogenase (365 aa).

78-91 (GYKWDSLPRSQRPE) is an NAD(+) binding site. Substrate is bound by residues Arg-98, Arg-108, Arg-136, and Asp-226. Positions 226, 250, and 254 each coordinate Mg(2+). Residue 284–296 (GSAPDIAGQDKAN) coordinates NAD(+).

It belongs to the isocitrate and isopropylmalate dehydrogenases family. LeuB type 1 subfamily. In terms of assembly, homodimer. It depends on Mg(2+) as a cofactor. Mn(2+) is required as a cofactor.

The protein localises to the cytoplasm. The enzyme catalyses (2R,3S)-3-isopropylmalate + NAD(+) = 4-methyl-2-oxopentanoate + CO2 + NADH. Its pathway is amino-acid biosynthesis; L-leucine biosynthesis; L-leucine from 3-methyl-2-oxobutanoate: step 3/4. In terms of biological role, catalyzes the oxidation of 3-carboxy-2-hydroxy-4-methylpentanoate (3-isopropylmalate) to 3-carboxy-4-methyl-2-oxopentanoate. The product decarboxylates to 4-methyl-2 oxopentanoate. This chain is 3-isopropylmalate dehydrogenase, found in Synechococcus elongatus (strain ATCC 33912 / PCC 7942 / FACHB-805) (Anacystis nidulans R2).